A 72-amino-acid chain; its full sequence is Long neurotoxin 1 (72 aa).

Cystine bridges form between cysteine 3/cysteine 21, cysteine 14/cysteine 42, cysteine 27/cysteine 31, cysteine 46/cysteine 57, and cysteine 58/cysteine 63.

This sequence belongs to the three-finger toxin family. Long-chain subfamily. Type II alpha-neurotoxin sub-subfamily. Expressed by the venom gland.

Its subcellular location is the secreted. Binds with high affinity to muscular (alpha-1/CHRNA1) and neuronal (alpha-7/CHRNA7) nicotinic acetylcholine receptor (nAChR) and inhibits acetylcholine from binding to the receptor, thereby impairing neuromuscular and neuronal transmission. This is Long neurotoxin 1 from Naja anchietae (Anchieta's cobra).